A 752-amino-acid polypeptide reads, in one-letter code: MTAGSVCVPQIIPLRVPQPGKANHEIDNNTLLEMKSDTPDVNIYYTLDGSKPEFLKRIGYGENNTFKYIKPITLPDGKIQVKAIAVSKDCRQSGIVTKVFHVDYEPPNIVSPEDNVENVLKDSSRQEFKNGFVGSKLKKKYKNSENQRSWNVNLRKFPESPLEIPAYGGGSGSRPPTRQSQSPGFAHVSGQKCLTSTEIMRIQRETDFLKCAHCLAPRPSDPFARFCQECGSPVPPIFGCRLPPPEGAQMGLCAECRSLVPMNTPICVVCEAPLALQLQPQASLHLKEKVICRACGTGNPAHLRYCVTCEGALPSSQESMCSGDKAPPPPTQKGGTISCYRCGRWNLWEASFCGWCGAMLGIPAGCSVCPKCGASNHLSARFCGSCGICVKSLVKLSLDRSLALAAEEPRPFSESLNIPLPRSDVGTKRDIGTQTVGLFYPSGKLLAKKEQELASQKQRQEKMSDHKPLLTAISPGRGYWRRQLDHISAHLRCYAQNNPEFRALIAEPRMGKLISATVHEDGCEVSIRLNYSQVSNKNLYLNKAVNFSDHLLSSAAEGDGGLCGSRSSWVSDYSQSTSDTIEKIKRIKNFKTKTFQEKKEQLIPENRLLLKEVGPTGEGRVSVIEQLLDEGADPNCCDEDNRPVITVAVMNKHHEAIPVLVQRGADIDQQWGPLRNTALHEATLLGLAGRESTATLLGCNASIQKKNAGGQTAYDLALNTGDDLVTSLFAAKFGQGLEDQLAQTRSLSLDDC.

A phosphoserine mark is found at S160 and S182. A disordered region spans residues 164–187; the sequence is IPAYGGGSGSRPPTRQSQSPGFAH. Residues 174-183 are compositionally biased toward polar residues; the sequence is RPPTRQSQSP. 2 DZANK-type zinc fingers span residues 211-270 and 339-387; these read CAHC…CVVC and CYRC…GSCG. ANK repeat units follow at residues 605–636 and 640–669; these read ENRLLLKEVGPTGEGRVSVIEQLLDEGADPNC and DNRPVITVAVMNKHHEAIPVLVQRGADIDQ.

Interacts with NINL isoform 2. Associates with DYNC1H1 and multiple dynein intermediate and light chains as well as actin-binding proteins.

The protein localises to the cytoplasm. It localises to the cytoskeleton. Its subcellular location is the microtubule organizing center. The protein resides in the centrosome. It is found in the cilium basal body. Involved in vesicle transport in photoreceptor cells. In Homo sapiens (Human), this protein is Double zinc ribbon and ankyrin repeat-containing protein 1.